The sequence spans 197 residues: Female-specific protein transformer (197 aa).

2 stretches are compositionally biased toward basic and acidic residues: residues 1–17 (MKMD…DSRG) and 24–39 (RERE…DSRK). 2 disordered regions span residues 1–136 (MKMD…PKII) and 158–197 (GYQR…RPPY). 2 stretches are compositionally biased toward basic residues: residues 58-75 (RRLR…RSRS) and 84-127 (SRHR…RSPH). Pro residues predominate over residues 163–172 (PRPPPFPPAP).

It localises to the nucleus speckle. Its function is as follows. Member of the regulatory pathway controlling female somatic sexual differentiation, regulated by Sxl. Activates dsx female-specific splicing by promoting the formation of a splicing enhancer complex which consists of tra, tra2 and sr proteins. Together with tra-2, plays a role in switching fru splicing from the male-specific pattern to the female-specific pattern through activation of the female-specific fru 5'-splice site. No known function in males. The sequence is that of Female-specific protein transformer (tra) from Drosophila melanogaster (Fruit fly).